A 251-amino-acid polypeptide reads, in one-letter code: Triosephosphate isomerase (251 aa).

9–11 (NWK) contributes to the substrate binding site. The Electrophile role is filled by histidine 95. Glutamate 167 acts as the Proton acceptor in catalysis. Residues glycine 173, serine 212, and 233–234 (GG) each bind substrate.

The protein belongs to the triosephosphate isomerase family. Homodimer.

The protein localises to the cytoplasm. It catalyses the reaction D-glyceraldehyde 3-phosphate = dihydroxyacetone phosphate. It functions in the pathway carbohydrate biosynthesis; gluconeogenesis. The protein operates within carbohydrate degradation; glycolysis; D-glyceraldehyde 3-phosphate from glycerone phosphate: step 1/1. In terms of biological role, involved in the gluconeogenesis. Catalyzes stereospecifically the conversion of dihydroxyacetone phosphate (DHAP) to D-glyceraldehyde-3-phosphate (G3P). This Ectopseudomonas mendocina (strain ymp) (Pseudomonas mendocina) protein is Triosephosphate isomerase.